The chain runs to 380 residues: Cytochrome b (380 aa).

Helical transmembrane passes span 34 to 54 (FGSL…FLAM), 78 to 99 (WLLR…YFHI), 114 to 134 (WYTG…GYIL), and 179 to 199 (FFTL…IHLL). Histidine 84 and histidine 98 together coordinate heme b. Positions 183 and 197 each coordinate heme b. Histidine 202 is an a ubiquinone binding site. The next 4 membrane-spanning stretches (helical) occupy residues 227 to 247 (YKDL…TLFL), 289 to 309 (LGGV…PTLH), 321 to 341 (FTQI…WIGA), and 348 to 368 (FIMI…LLIP).

Belongs to the cytochrome b family. As to quaternary structure, the cytochrome bc1 complex contains 3 respiratory subunits (MT-CYB, CYC1 and UQCRFS1), 2 core proteins (UQCRC1 and UQCRC2) and probably 6 low-molecular weight proteins. It depends on heme b as a cofactor.

The protein resides in the mitochondrion inner membrane. Its function is as follows. Component of the ubiquinol-cytochrome c reductase complex (complex III or cytochrome b-c1 complex) that is part of the mitochondrial respiratory chain. The b-c1 complex mediates electron transfer from ubiquinol to cytochrome c. Contributes to the generation of a proton gradient across the mitochondrial membrane that is then used for ATP synthesis. This is Cytochrome b (MT-CYB) from Pelomedusa subrufa (African side-necked turtle).